Reading from the N-terminus, the 136-residue chain is Large ribosomal subunit protein uL16 (136 aa).

This sequence belongs to the universal ribosomal protein uL16 family. In terms of assembly, part of the 50S ribosomal subunit.

Functionally, binds 23S rRNA and is also seen to make contacts with the A and possibly P site tRNAs. This Rickettsia peacockii (strain Rustic) protein is Large ribosomal subunit protein uL16.